Reading from the N-terminus, the 338-residue chain is Tagatose 1,6-diphosphate aldolase (338 aa).

The protein belongs to the aldolase LacD family.

The catalysed reaction is D-tagatofuranose 1,6-bisphosphate = D-glyceraldehyde 3-phosphate + dihydroxyacetone phosphate. It participates in carbohydrate metabolism; D-tagatose 6-phosphate degradation; D-glyceraldehyde 3-phosphate and glycerone phosphate from D-tagatose 6-phosphate: step 2/2. This is Tagatose 1,6-diphosphate aldolase from Listeria innocua serovar 6a (strain ATCC BAA-680 / CLIP 11262).